The primary structure comprises 250 residues: Probable transcriptional regulatory protein RER_29220 (250 aa).

Belongs to the TACO1 family.

The protein localises to the cytoplasm. This is Probable transcriptional regulatory protein RER_29220 from Rhodococcus erythropolis (strain PR4 / NBRC 100887).